The chain runs to 66 residues: Conotoxin Cl14.1a (66 aa).

Positions 1 to 19 (MNVTAMFIVLLLTMPLTDG) are cleaved as a signal peptide. Residues 20-49 (FNIRAINGGELFGLVQRDAGNALDHGFYRR) constitute a propeptide that is removed on maturation.

Belongs to the conotoxin L superfamily. In terms of processing, contains 2 disulfide bonds. In terms of tissue distribution, expressed by the venom duct.

The protein localises to the secreted. Its function is as follows. Probable neurotoxin with unknown target. Possibly targets ion channels. This peptide could be considered as an apoptosis activator in some cancers (tested on lung and breast cancer cell lines). Provokes the decrease of H1299 lung cancer cells viability after 24 hours treatment, and induces a high Bax/Bcl-2 ratio, which suggests that this peptide can activate apoptosis in H1299 cells. In addition, H1299 and H1437 lung cancer cell lines treated with this peptide have decreased cell viability, activated caspases, and reduced expression of the pro-survival protein NF-kappa-B (NFKB1), indicating activation of apoptosis. In synergy with MicroRNA-101-3p, this synthetic peptide inhibits breast cancer cells (SK-BR-3 and MCF-7) migration, invasion, and proliferation through suppressing the expression of the methyltransferase EZH2. In parallel, this synergy treatment is able to promote the apoptosis of breast cancer cells. Against microbes, this synthetic toxin (at micromolar concentrations) lowers viability and inhibits host cell invasion by the opportunistic parasite Toxoplasma gondii (tachyzoite form). In addition, it permits T.gondii intracellular replication to decrease while viability of the host cell is unaffected. This Californiconus californicus (California cone) protein is Conotoxin Cl14.1a.